The primary structure comprises 162 residues: Crossover junction endodeoxyribonuclease RuvC (162 aa).

Active-site residues include D8, E69, and H141. Mg(2+)-binding residues include D8, E69, and H141.

The protein belongs to the RuvC family. In terms of assembly, homodimer which binds Holliday junction (HJ) DNA. The HJ becomes 2-fold symmetrical on binding to RuvC with unstacked arms; it has a different conformation from HJ DNA in complex with RuvA. In the full resolvosome a probable DNA-RuvA(4)-RuvB(12)-RuvC(2) complex forms which resolves the HJ. It depends on Mg(2+) as a cofactor.

The protein localises to the cytoplasm. It carries out the reaction Endonucleolytic cleavage at a junction such as a reciprocal single-stranded crossover between two homologous DNA duplexes (Holliday junction).. The RuvA-RuvB-RuvC complex processes Holliday junction (HJ) DNA during genetic recombination and DNA repair. Endonuclease that resolves HJ intermediates. Cleaves cruciform DNA by making single-stranded nicks across the HJ at symmetrical positions within the homologous arms, yielding a 5'-phosphate and a 3'-hydroxyl group; requires a central core of homology in the junction. The consensus cleavage sequence is 5'-(A/T)TT(C/G)-3'. Cleavage occurs on the 3'-side of the TT dinucleotide at the point of strand exchange. HJ branch migration catalyzed by RuvA-RuvB allows RuvC to scan DNA until it finds its consensus sequence, where it cleaves and resolves the cruciform DNA. The polypeptide is Crossover junction endodeoxyribonuclease RuvC (Wolbachia sp. subsp. Drosophila simulans (strain wRi)).